Reading from the N-terminus, the 267-residue chain is MHRIAVPAAKGAPTAQAPVKVAARNLDFYYDKYHALKGINIEIPEKRVTALIGPSGCGKSTLLRIFNRIYALYPKLEARGEVLLDGENILSPKYPMNRLRSKVGMVFQKPVPFPMTIFENVAYGIRHHEKLSKADMQNRVEHALRQGALWDEVKDKLGQSALGLSGGQQQRLCIARAVALRPDVLLLDEPTSALDPISTSRIEQLVEELKRDYTIVIVTHNMQQAARVSDYTAFMYLGDLIEHDRTETIFSQPSKQQTEDYITGRFG.

One can recognise an ABC transporter domain in the interval 21-262; that stretch reads VAARNLDFYY…PSKQQTEDYI (242 aa). 53-60 lines the ATP pocket; sequence GPSGCGKS.

The protein belongs to the ABC transporter superfamily. Phosphate importer (TC 3.A.1.7) family. The complex is composed of two ATP-binding proteins (PstB), two transmembrane proteins (PstC and PstA) and a solute-binding protein (PstS).

Its subcellular location is the cell inner membrane. It catalyses the reaction phosphate(out) + ATP + H2O = ADP + 2 phosphate(in) + H(+). Its function is as follows. Part of the ABC transporter complex PstSACB involved in phosphate import. Responsible for energy coupling to the transport system. In Xanthomonas campestris pv. campestris (strain 8004), this protein is Phosphate import ATP-binding protein PstB.